An 858-amino-acid polypeptide reads, in one-letter code: Elongation factor 2 (858 aa).

In terms of domain architecture, tr-type G spans Ala-17–Val-362. A GTP-binding site is contributed by Ala-26–Ser-33. Thr-54 is modified (phosphothreonine). At Thr-57 the chain carries Phosphothreonine; by EEF2K. Thr-59 is subject to Phosphothreonine. Lys-152 carries the post-translational modification N6-succinyllysine. Residues Asn-158–Asp-161 and Ser-216–Leu-218 contribute to the GTP site. An N6-acetyllysine modification is found at Lys-235. Lys-239 carries the N6-acetyllysine; alternate modification. Lys-239 is covalently cross-linked (Glycyl lysine isopeptide (Lys-Gly) (interchain with G-Cter in SUMO1); alternate). Tyr-265 carries the post-translational modification Phosphotyrosine; by CSK. Lys-272 is modified (N6-acetyllysine; alternate). Lys-272 is modified (N6-succinyllysine; alternate). Lys-275 bears the N6-acetyllysine mark. Lys-322 participates in a covalent cross-link: Glycyl lysine isopeptide (Lys-Gly) (interchain with G-Cter in SUMO). Ser-325 is modified (phosphoserine). Residue Tyr-373 is modified to Phosphotyrosine; by CSK. Position 435 is a phosphothreonine (Thr-435). N6-acetyllysine is present on residues Lys-439 and Lys-445. Residue Ser-502 is modified to Phosphoserine. Lys-525 is subject to N6,N6,N6-trimethyllysine; by EEF2KMT. Lys-529 is covalently cross-linked (Glycyl lysine isopeptide (Lys-Gly) (interchain with G-Cter in SUMO)). Lys-572 is subject to N6-succinyllysine. Position 595 is a phosphoserine; by CDK2 (Ser-595). N6-acetyllysine is present on Lys-619. His-715 is subject to (Microbial infection) ADP-ribosyldiphthamide. Residue His-715 is modified to Diphthamide.

The protein belongs to the TRAFAC class translation factor GTPase superfamily. Classic translation factor GTPase family. EF-G/EF-2 subfamily. As to quaternary structure, binds to 80S ribosomes. Actively translating ribosomes show mutually exclusive binding of eIF5a (EIF5A or EIF5A2) and EEF2/eEF2. Interacts with SERBP1; interaction sequesters EEF2/eEF2 at the A-site of the ribosome, thereby blocking the interaction sites of the mRNA-tRNA complex, promoting ribosome stabilization and hibernation. Interacts with HABP4; interaction takes place at the A-site of hibernating ribosomes and promotes ribosome stabilization. Component of the mRNA surveillance SURF complex, at least composed of ERF1, ERF3 (ERF3A or ERF3B), EEF2, UPF1/RENT1, SMG1, SMG8 and SMG9. Interacts with RBPMS2. In terms of processing, phosphorylation by EF-2 kinase completely inactivates EF-2; it requires prior phosphorylation by CDK2 at Ser-595 during mitotic prometaphase. Phosphorylation by CSK promotes SUMOylation, proteolytic cleavage, and nuclear translocation if the C-terminal fragment. Post-translationally, diphthamide is 2-[3-carboxyamido-3-(trimethyl-ammonio)propyl]histidine. (Microbial infection) Diphthamide can be ADP-ribosylated by diphtheria toxin and by Pseudomonas exotoxin A, thus arresting protein synthesis. In terms of processing, ISGylated. Post-translationally, proteolytically processed at two sites following phosphorylation by CSK. SUMOylated following phosphorylation by CSK, promotes proteolytic cleavage.

It is found in the cytoplasm. It localises to the nucleus. It carries out the reaction GTP + H2O = GDP + phosphate + H(+). In terms of biological role, catalyzes the GTP-dependent ribosomal translocation step during translation elongation. During this step, the ribosome changes from the pre-translocational (PRE) to the post-translocational (POST) state as the newly formed A-site-bound peptidyl-tRNA and P-site-bound deacylated tRNA move to the P and E sites, respectively. Catalyzes the coordinated movement of the two tRNA molecules, the mRNA and conformational changes in the ribosome. This Cricetulus griseus (Chinese hamster) protein is Elongation factor 2 (EEF2).